A 358-amino-acid polypeptide reads, in one-letter code: Thiol protease aleurain-like (358 aa).

The first 21 residues, 1–21 (MSVKLNLSSSILLILFAAAAS), serve as a signal peptide directing secretion. Residues 22–140 (KEIGFDESNP…KGSHKITEAT (119 aa)) constitute a propeptide, activation peptide. N-linked (GlcNAc...) asparagine glycosylation is present at Asn125. Intrachain disulfides connect Cys162-Cys205 and Cys196-Cys238. Residue Cys165 is part of the active site. Residue Asn254 is glycosylated (N-linked (GlcNAc...) asparagine). A disulfide bridge links Cys296 with Cys346. Active-site residues include His305 and Asn325.

It belongs to the peptidase C1 family.

The protein localises to the vacuole. The catalysed reaction is Hydrolysis of proteins, acting as an aminopeptidase (notably, cleaving Arg-|-Xaa bonds) as well as an endopeptidase.. Its function is as follows. May play a role in proteolysis leading to mobilization of nitrogen during senescence and starvation. This is Thiol protease aleurain-like from Arabidopsis thaliana (Mouse-ear cress).